The sequence spans 195 residues: L-rhamnose-binding lectin CSL2 (195 aa).

SUEL-type lectin domains follow at residues 1-97 (TRVV…YTCL) and 104-195 (TCEG…YTCG).

In terms of biological role, L-rhamnose binding lectin. Has hemagglutinating activity towards rabbit erythrocytes and human type B erythrocytes. Hemagglutinating activity is inhibited by smooth-type lipopolysaccharide (LPS) from S.flexneri 1A and E.coli K12, but not by rough-type LPS from S.flexneri, E.coli K12 and E.coli EH100. Agglutinates E.coli K12 and B.subtilis. This is L-rhamnose-binding lectin CSL2 from Oncorhynchus keta (Chum salmon).